Here is a 563-residue protein sequence, read N- to C-terminus: Protein NOXP20 (563 aa).

Residues 1–84 (MSDDAGDTLA…ANALEPPLNG (84 aa)) are disordered. Residues 56 to 68 (AAVQGAGAAAIGP) are compositionally biased toward low complexity. Ser120 is subject to Phosphoserine. Positions 165–206 (VNSGSSEGAQPNTENGVPEITDAATDQGPAESPPTSPSSASR) are disordered. Positions 166 to 179 (NSGSSEGAQPNTEN) are enriched in polar residues. 2 positions are modified to phosphothreonine: Thr185 and Thr189. A Phosphoserine modification is found at Ser196. At Thr199 the chain carries Phosphothreonine. Residues Ser202 and Ser261 each carry the phosphoserine modification. Residues 343-367 (AAKELENEENQEEQGLEEKGEEFAR) are a coiled coil. The disordered stretch occupies residues 411–436 (SEEETKKEEKEEKSQDPQEDKKEEKK).

The protein belongs to the FAM114 family.

It localises to the cytoplasm. In terms of biological role, may play a role in neuronal cell development. In Homo sapiens (Human), this protein is Protein NOXP20 (FAM114A1).